The primary structure comprises 215 residues: CASP-like protein 1E1 (215 aa).

The Cytoplasmic portion of the chain corresponds to Met-1 to Cys-51. The helical transmembrane segment at Cys-52–Ala-72 threads the bilayer. At Asp-73–Ser-103 the chain is on the extracellular side. A helical transmembrane segment spans residues Ala-104–Ala-124. The Cytoplasmic portion of the chain corresponds to Ala-125 to Ser-130. A helical membrane pass occupies residues Ala-131–Gly-151. Residues Ala-152–Ala-185 are Extracellular-facing. Residues Ala-186–Leu-206 form a helical membrane-spanning segment. Residues Thr-207–Tyr-215 lie on the Cytoplasmic side of the membrane.

The protein belongs to the Casparian strip membrane proteins (CASP) family. In terms of assembly, homodimer and heterodimers.

The protein localises to the cell membrane. The protein is CASP-like protein 1E1 of Oryza sativa subsp. indica (Rice).